The following is a 92-amino-acid chain: Signal recognition particle 19 kDa protein (92 aa).

Belongs to the SRP19 family. As to quaternary structure, part of the signal recognition particle protein translocation system, which is composed of SRP and FtsY. Archaeal SRP consists of a 7S RNA molecule of 300 nucleotides and two protein subunits: SRP54 and SRP19.

Its subcellular location is the cytoplasm. In terms of biological role, involved in targeting and insertion of nascent membrane proteins into the cytoplasmic membrane. Binds directly to 7S RNA and mediates binding of the 54 kDa subunit of the SRP. The chain is Signal recognition particle 19 kDa protein from Halorubrum lacusprofundi (strain ATCC 49239 / DSM 5036 / JCM 8891 / ACAM 34).